Reading from the N-terminus, the 385-residue chain is Mitochondrial fission regulator 2 (385 aa).

Ser-2 is modified (N-acetylserine). A Phosphoserine modification is found at Ser-119. The interval 195-268 (SVDPDQLPGS…SHHSKSQRNK (74 aa)) is disordered. Residues 207-216 (SPPPPPPLPP) are compositionally biased toward pro residues. The span at 231–257 (PGSNNICDSDNPATEMSKQNPAANKTN) shows a compositional bias: polar residues. 2 positions are modified to phosphoserine: Ser-291 and Ser-328. Positions 331–363 (KENRSWESSPFSSPETSRFGHHISQSEGQRTKE) are disordered. The span at 336 to 346 (WESSPFSSPET) shows a compositional bias: polar residues.

This sequence belongs to the MTFR1 family.

It localises to the mitochondrion. Functionally, may play a role in mitochondrial aerobic respiration essentially in the testis. Can also promote mitochondrial fission. In Homo sapiens (Human), this protein is Mitochondrial fission regulator 2 (MTFR2).